The chain runs to 237 residues: Uridylate kinase (237 aa).

An ATP-binding site is contributed by Lys12–Gly15. An involved in allosteric activation by GTP region spans residues Gly20–Gly25. Residue Gly54 participates in UMP binding. Positions 55 and 59 each coordinate ATP. Residues Asp74 and Thr135–Thr142 contribute to the UMP site. Thr162, Tyr168, and Asp171 together coordinate ATP.

The protein belongs to the UMP kinase family. In terms of assembly, homohexamer.

The protein localises to the cytoplasm. It catalyses the reaction UMP + ATP = UDP + ADP. The protein operates within pyrimidine metabolism; CTP biosynthesis via de novo pathway; UDP from UMP (UMPK route): step 1/1. Allosterically activated by GTP. Inhibited by UTP. Catalyzes the reversible phosphorylation of UMP to UDP. This chain is Uridylate kinase (pyrH), found in Haemophilus influenzae (strain ATCC 51907 / DSM 11121 / KW20 / Rd).